A 275-amino-acid chain; its full sequence is MRRISPTRFLLYIVLIFLAAWYLLPIWSAITTSTKTGEQVALTTPVQFVFPPTFDPYREAFRELKRPILNSLIFTTFATIFSTILGSIAGFTIAKLVRGRVSRQLLALISFGIFLPYQSILIPLVKIISSLGLYNRILGLILTHTAYGIPITTLLFTNYYYEIPDELVEAAKIDGADPWKIYTKVILPLSKAPFVVTGIYQFTNIWNDYLFGVVLTRGEEAMPATVKLANLKGSFVANWNIQMAGALIVALPTLLIMIALGKYLIRGYTSGALKG.

Helical transmembrane passes span 10–30 (LLYI…WSAI), 73–93 (IFTT…GFTI), 105–125 (LLAL…IPLV), 137–157 (ILGL…LLFT), 181–203 (IYTK…YQFT), and 241–261 (IQMA…IALG). Residues 68 to 260 (ILNSLIFTTF…LPTLLIMIAL (193 aa)) enclose the ABC transmembrane type-1 domain.

It belongs to the binding-protein-dependent transport system permease family. MalFG subfamily.

It localises to the cell membrane. Probably part of a binding-protein-dependent transport system PH1214/15/16. Probably responsible for the translocation of the substrate across the membrane. This is Probable ABC transporter permease protein PH1216 from Pyrococcus horikoshii (strain ATCC 700860 / DSM 12428 / JCM 9974 / NBRC 100139 / OT-3).